A 355-amino-acid chain; its full sequence is Elongation factor Ts (355 aa).

Residues 82-85 are involved in Mg(2+) ion dislocation from EF-Tu; sequence TDFV.

Belongs to the EF-Ts family.

The protein localises to the cytoplasm. Its function is as follows. Associates with the EF-Tu.GDP complex and induces the exchange of GDP to GTP. It remains bound to the aminoacyl-tRNA.EF-Tu.GTP complex up to the GTP hydrolysis stage on the ribosome. This is Elongation factor Ts from Wolinella succinogenes (strain ATCC 29543 / DSM 1740 / CCUG 13145 / JCM 31913 / LMG 7466 / NCTC 11488 / FDC 602W) (Vibrio succinogenes).